The primary structure comprises 364 residues: Cobalt-precorrin-5B C(1)-methyltransferase (364 aa).

This sequence belongs to the CbiD family.

The catalysed reaction is Co-precorrin-5B + S-adenosyl-L-methionine = Co-precorrin-6A + S-adenosyl-L-homocysteine. The protein operates within cofactor biosynthesis; adenosylcobalamin biosynthesis; cob(II)yrinate a,c-diamide from sirohydrochlorin (anaerobic route): step 6/10. Catalyzes the methylation of C-1 in cobalt-precorrin-5B to form cobalt-precorrin-6A. This is Cobalt-precorrin-5B C(1)-methyltransferase from Pseudomonas putida (strain ATCC 700007 / DSM 6899 / JCM 31910 / BCRC 17059 / LMG 24140 / F1).